A 359-amino-acid chain; its full sequence is CMP-N-acetylneuraminate-poly-alpha-2,8-sialyltransferase (359 aa).

The Cytoplasmic segment spans residues 1–7 (MRSIRKR). The helical; Signal-anchor for type II membrane protein transmembrane segment at 8-20 (WTICTISLLLIFY) threads the bilayer. Residues 21–359 (KTKEIARTEE…KLTTGKCMKQ (339 aa)) are Lumenal-facing. 3 N-linked (GlcNAc...) asparagine glycosylation sites follow: Asn50, Asn74, and Asn119. Disulfide bonds link Cys142–Cys292 and Cys156–Cys356. The CMP-N-acetyl-beta-neuraminate site is built by Asn147 and Asn170. 2 N-linked (GlcNAc...) asparagine glycosylation sites follow: Asn204 and Asn219. Residues Ser279, Thr280, Gly281, and Trp301 each contribute to the CMP-N-acetyl-beta-neuraminate site. The active-site Proton donor/acceptor is His331.

This sequence belongs to the glycosyltransferase 29 family. Post-translationally, autopolysialylated.

The protein resides in the golgi apparatus membrane. The protein localises to the secreted. It catalyses the reaction [N-acetyl-alpha-D-neuraminosyl-(2-&gt;8)](n) + CMP-N-acetyl-beta-neuraminate = [N-acetyl-alpha-D-neuraminosyl-(2-&gt;8)](n+1) + CMP + H(+). It functions in the pathway protein modification; protein glycosylation. Functionally, catalyzes the transfer of a sialic acid from a CMP-linked sialic acid donor onto a terminal alpha-2,3-, alpha-2,6-, or alpha-2,8-linked sialic acid of an N-linked glycan protein acceptor through alpha-2,8-linkages. Therefore, participates in polysialic acid synthesis on various sialylated N-acetyllactosaminyl oligosaccharides, including NCAM1 N-glycans, FETUB N-glycans and AHSG. It is noteworthy that alpha-2,3-linked sialic acid is apparently a better acceptor than alpha-2,6-linked sialic acid. In Cricetulus griseus (Chinese hamster), this protein is CMP-N-acetylneuraminate-poly-alpha-2,8-sialyltransferase.